A 103-amino-acid polypeptide reads, in one-letter code: METVQELIPLAKEMMAQKRKGKMVKLYVLGSVLALFGVVLGLMETVCSPFTAARRLRDQEAAVAELQAALERQALQKQALQEKGKQQDTVLGGRALSNRQHAS.

A disordered region spans residues 80–103 (LQEKGKQQDTVLGGRALSNRQHAS).

As to quaternary structure, directly interacts with BCL2; this interaction prevents the formation of the anti-apoptotic BAX-BCL2 complex. In terms of tissue distribution, widely expressed with highest levels in peripheral blood, skeletal muscle and heart, followed by kidney and liver.

It localises to the mitochondrion. In terms of biological role, promotes apoptosis by binding to BCL2, hence preventing the formation of protective BCL2-BAX heterodimers. The protein is G0/G1 switch protein 2 (G0S2) of Homo sapiens (Human).